The primary structure comprises 875 residues: DNA mismatch repair protein MutS (875 aa).

ATP is bound at residue 626–633 (GPNMAGKS). The segment at 830–855 (RAAPPPPAPAAPKTSPVEERLREIQP) is disordered. Basic and acidic residues predominate over residues 845 to 855 (PVEERLREIQP).

It belongs to the DNA mismatch repair MutS family.

Its function is as follows. This protein is involved in the repair of mismatches in DNA. It is possible that it carries out the mismatch recognition step. This protein has a weak ATPase activity. This chain is DNA mismatch repair protein MutS, found in Cereibacter sphaeroides (strain ATCC 17023 / DSM 158 / JCM 6121 / CCUG 31486 / LMG 2827 / NBRC 12203 / NCIMB 8253 / ATH 2.4.1.) (Rhodobacter sphaeroides).